Consider the following 83-residue polypeptide: Cytochrome b559 subunit alpha (83 aa).

Residues 21-35 (VIHSITIPSLFIAGW) traverse the membrane as a helical segment. Position 23 (histidine 23) interacts with heme.

The protein belongs to the PsbE/PsbF family. As to quaternary structure, heterodimer of an alpha subunit and a beta subunit. PSII is composed of 1 copy each of membrane proteins PsbA, PsbB, PsbC, PsbD, PsbE, PsbF, PsbH, PsbI, PsbJ, PsbK, PsbL, PsbM, PsbT, PsbX, PsbY, PsbZ, Psb30/Ycf12, at least 3 peripheral proteins of the oxygen-evolving complex and a large number of cofactors. It forms dimeric complexes. Requires heme b as cofactor.

The protein resides in the plastid. It localises to the chloroplast thylakoid membrane. In terms of biological role, this b-type cytochrome is tightly associated with the reaction center of photosystem II (PSII). PSII is a light-driven water:plastoquinone oxidoreductase that uses light energy to abstract electrons from H(2)O, generating O(2) and a proton gradient subsequently used for ATP formation. It consists of a core antenna complex that captures photons, and an electron transfer chain that converts photonic excitation into a charge separation. In Chaetosphaeridium globosum (Charophycean green alga), this protein is Cytochrome b559 subunit alpha.